The chain runs to 218 residues: Large ribosomal subunit protein uL3 (218 aa).

Positions 121-163 (GYQKRHGFSRGPMTHGSKNHREPGSIGPGTTPGRIYPGKRMAG) are disordered.

It belongs to the universal ribosomal protein uL3 family. In terms of assembly, part of the 50S ribosomal subunit. Forms a cluster with proteins L14 and L19.

Functionally, one of the primary rRNA binding proteins, it binds directly near the 3'-end of the 23S rRNA, where it nucleates assembly of the 50S subunit. This Parasynechococcus marenigrum (strain WH8102) protein is Large ribosomal subunit protein uL3.